The chain runs to 108 residues: UPF0102 protein SO_0299 (108 aa).

The protein belongs to the UPF0102 family.

The sequence is that of UPF0102 protein SO_0299 from Shewanella oneidensis (strain ATCC 700550 / JCM 31522 / CIP 106686 / LMG 19005 / NCIMB 14063 / MR-1).